Here is a 203-residue protein sequence, read N- to C-terminus: MIFSVRGEVLEVALDHAVIEAAGIGYRVNATPSALATLRQGSQARLVTAMVVREDSMTLYGFSDAENRDLFLALLSVSGVGPRLAMATLAVHDAAALRQALADSDVASLTRVPGIGKRGAERIVLELRDKVGPVGASGLTVGTAADGNAVRGSVVEALVGLGFAAKQAEEATDQVLDGELGKDGAVATSSALRAALSLLGKTR.

Residues 1–63 (MIFSVRGEVL…EDSMTLYGFS (63 aa)) form a domain I region. The domain II stretch occupies residues 64–141 (DAENRDLFLA…GPVGASGLTV (78 aa)). Residues 141 to 145 (VGTAA) form a flexible linker region. A domain III region spans residues 146–203 (DGNAVRGSVVEALVGLGFAAKQAEEATDQVLDGELGKDGAVATSSALRAALSLLGKTR).

Belongs to the RuvA family. As to quaternary structure, homotetramer. Forms an RuvA(8)-RuvB(12)-Holliday junction (HJ) complex. HJ DNA is sandwiched between 2 RuvA tetramers; dsDNA enters through RuvA and exits via RuvB. An RuvB hexamer assembles on each DNA strand where it exits the tetramer. Each RuvB hexamer is contacted by two RuvA subunits (via domain III) on 2 adjacent RuvB subunits; this complex drives branch migration. In the full resolvosome a probable DNA-RuvA(4)-RuvB(12)-RuvC(2) complex forms which resolves the HJ.

The protein resides in the cytoplasm. Functionally, the RuvA-RuvB-RuvC complex processes Holliday junction (HJ) DNA during genetic recombination and DNA repair, while the RuvA-RuvB complex plays an important role in the rescue of blocked DNA replication forks via replication fork reversal (RFR). RuvA specifically binds to HJ cruciform DNA, conferring on it an open structure. The RuvB hexamer acts as an ATP-dependent pump, pulling dsDNA into and through the RuvAB complex. HJ branch migration allows RuvC to scan DNA until it finds its consensus sequence, where it cleaves and resolves the cruciform DNA. This Mycobacterium leprae (strain Br4923) protein is Holliday junction branch migration complex subunit RuvA.